The primary structure comprises 715 residues: Putative macrophage stimulating 1-like protein (715 aa).

The N-terminal stretch at 1–20 (MAPAPVTLLAPGAASSMSCS) is a signal peptide. Residues 21–110 (QPGQRSPSND…GRCDLFQEKG (90 aa)) form the PAN domain. Kringle domains follow at residues 63-156 (GRCG…IKSC), 160-238 (ACVW…LPRC), 252-345 (SCFR…IRRC), and 353-464 (DCYH…LRRC). 12 disulfide bridges follow: Cys127–Cys151, Cys161–Cys238, Cys182–Cys221, Cys210–Cys233, Cys253–Cys345, Cys316–Cys339, Cys354–Cys464, Cys375–Cys447, Cys511–Cys527, Cys606–Cys671, Cys636–Cys650, and Cys661–Cys689. The Peptidase S1 domain occupies 488-713 (VAGGHPGNSP…FVDWIHKVMR (226 aa)).

This sequence belongs to the peptidase S1 family. Plasminogen subfamily.

The protein resides in the secreted. This chain is Putative macrophage stimulating 1-like protein (MST1L), found in Homo sapiens (Human).